The sequence spans 113 residues: Hydrogenase maturation factor HybF (113 aa).

2 residues coordinate Ni(2+): H2 and E3. 4 residues coordinate Zn(2+): C73, C76, C89, and C92.

It belongs to the HypA/HybF family. HybF subfamily. In terms of assembly, monomer.

In terms of biological role, involved in the maturation of [NiFe] hydrogenases. Required for nickel insertion into the metal center of the hydrogenase. HybF is involved in maturation of hydrogenases 1 and 2. It may partially substitute for the function of HypA and vice versa. This Escherichia coli (strain K12) protein is Hydrogenase maturation factor HybF.